The primary structure comprises 358 residues: Heterogeneous nuclear ribonucleoprotein A2 homolog 2 (358 aa).

2 consecutive RRM domains span residues 9–92 (RKLF…ESAK) and 100–179 (KKLF…LSKQ). 2 disordered regions span residues 182–217 (QDVQ…FRGG) and 333–358 (YGGG…RNRY). Residues 193-217 (GNFGFGDSRGGGNFGSGPGGNFRGG) are compositionally biased toward gly residues. Positions 309–352 (QQSSSYGPMKSGGNFGGNRSMGGPYGGGNYGPGNGSGASGGGGY) are nuclear targeting sequence.

The protein localises to the nucleus. In terms of biological role, forms complexes (ribonucleosomes) with at least 20 other different hnRNP and heterogeneous nuclear RNA in the nucleus. The sequence is that of Heterogeneous nuclear ribonucleoprotein A2 homolog 2 from Xenopus laevis (African clawed frog).